A 117-amino-acid chain; its full sequence is Non-specific lipid-transfer protein (117 aa).

Residues 1–26 form the signal peptide; sequence MASSAVIKLACAVLLCIVVAAPYAEA. Intrachain disulfides connect C30/C76, C40/C53, C54/C99, and C74/C113.

It belongs to the plant LTP family.

Plant non-specific lipid-transfer proteins transfer phospholipids as well as galactolipids across membranes. May play a role in wax or cutin deposition in the cell walls of expanding epidermal cells and certain secretory tissues. This chain is Non-specific lipid-transfer protein, found in Spinacia oleracea (Spinach).